Consider the following 296-residue polypeptide: MALRQCAIYGKGGIGKSTTTQNLVAGLAEAGNKIMIVGCDPKADSTRLILHAKAQNTIMEMAAQAGSVEDLELEDVLKAGFGGIKCVESGGPEPGVGCAGRGVITAINFLEEEGAYEEDLDFVFYDVLGDVVCGGFAMPIRQNKAQEIYIVVSGEMMAMYAANNIAKGIVKYASSGNVRLAGLICNSRNVDREDELIEALAAALGTQMIHFVPRDNVVQRAEIRRMTVIEYDPKSKQADEYRTLSNKIYNNKNFVVPTPLTMDELEDLLMKYGMMEEEDETIVGKTAEEEAAAATA.

10 to 17 (GKGGIGKS) contacts ATP. Position 98 (Cys-98) interacts with [4Fe-4S] cluster. Arg-101 bears the ADP-ribosylarginine; by dinitrogenase reductase ADP-ribosyltransferase mark. Cys-133 provides a ligand contact to [4Fe-4S] cluster.

This sequence belongs to the NifH/BchL/ChlL family. In terms of assembly, homodimer. Requires [4Fe-4S] cluster as cofactor. Post-translationally, the reversible ADP-ribosylation of Arg-101 inactivates the nitrogenase reductase and regulates nitrogenase activity.

The catalysed reaction is N2 + 8 reduced [2Fe-2S]-[ferredoxin] + 16 ATP + 16 H2O = H2 + 8 oxidized [2Fe-2S]-[ferredoxin] + 2 NH4(+) + 16 ADP + 16 phosphate + 6 H(+). In terms of biological role, the key enzymatic reactions in nitrogen fixation are catalyzed by the nitrogenase complex, which has 2 components: the iron protein and the molybdenum-iron protein. This is Nitrogenase iron protein from Magnetococcus marinus (strain ATCC BAA-1437 / JCM 17883 / MC-1).